A 650-amino-acid chain; its full sequence is Acetyl-coenzyme A synthetase (650 aa).

Residues 191-194, threonine 311, and asparagine 335 each bind CoA; that span reads RGGR. Residues 387 to 389, 411 to 416, aspartate 500, and arginine 515 contribute to the ATP site; these read GEP and DTWWQT. Residue serine 523 coordinates CoA. Residue arginine 526 coordinates ATP. Valine 537, histidine 539, and valine 542 together coordinate Mg(2+). Residue arginine 584 participates in CoA binding. Lysine 609 bears the N6-acetyllysine mark.

Belongs to the ATP-dependent AMP-binding enzyme family. Requires Mg(2+) as cofactor. Post-translationally, acetylated. Deacetylation by the SIR2-homolog deacetylase activates the enzyme.

It carries out the reaction acetate + ATP + CoA = acetyl-CoA + AMP + diphosphate. In terms of biological role, catalyzes the conversion of acetate into acetyl-CoA (AcCoA), an essential intermediate at the junction of anabolic and catabolic pathways. AcsA undergoes a two-step reaction. In the first half reaction, AcsA combines acetate with ATP to form acetyl-adenylate (AcAMP) intermediate. In the second half reaction, it can then transfer the acetyl group from AcAMP to the sulfhydryl group of CoA, forming the product AcCoA. In Shewanella amazonensis (strain ATCC BAA-1098 / SB2B), this protein is Acetyl-coenzyme A synthetase.